The sequence spans 119 residues: uncharacterized protein (119 aa).

Positions 63 to 104 (KKIKKELESNSEKRKAALQMIKEEHTAKVDRYKMIIEDLRQQ) form a coiled coil.

This is an uncharacterized protein from Bacillus subtilis (strain 168).